The chain runs to 350 residues: MQRALPGARQHLGAILASASVVVKALCAVVLFLYLLSFAVDTGCLAVTPGYLFPPNFWIWTLATHGLMEQHVWDVAISLATVVVAGRLLEPLWGALELLIFFSVVNVSVGLLGALAYLLTYMASFNLVYLFTIRIHGALGFLGGVLVALKQTMGDCVVLRVPQVRVSVVPMLLLALLLLLRLATLLQSPALASYGFGLLSSWVYLRFYQRHSRGRGDMADHFAFATFFPEILQPVVGLLANLVHGLLVKVKICQKTVKRYDVGAPSSITISLPGTDPQDAERRRQLALKALNERLKRVEDQSAWPSMDDDEEEAGAKTDSPLPLEEASTPPGKVTVPESSLITLETAPLL.

Topologically, residues 1 to 19 (MQRALPGARQHLGAILASA) are cytoplasmic. Residues 1–205 (MQRALPGARQ…FGLLSSWVYL (205 aa)) are mediates homooligomerization. The chain crosses the membrane as a helical span at residues 20–40 (SVVVKALCAVVLFLYLLSFAV). Topologically, residues 41 to 97 (DTGCLAVTPGYLFPPNFWIWTLATHGLMEQHVWDVAISLATVVVAGRLLEPLWGALE) are lumenal. The helical transmembrane segment at 98 to 118 (LLIFFSVVNVSVGLLGALAYL) threads the bilayer. Topologically, residues 119–126 (LTYMASFN) are cytoplasmic. A helical transmembrane segment spans residues 127 to 147 (LVYLFTIRIHGALGFLGGVLV). Residues 148-165 (ALKQTMGDCVVLRVPQVR) are Lumenal-facing. A helical transmembrane segment spans residues 166–186 (VSVVPMLLLALLLLLRLATLL). The Cytoplasmic segment spans residues 187-350 (QSPALASYGF…LITLETAPLL (164 aa)). The interval 206–229 (RFYQRHSRGRGDMADHFAFATFFP) is mediates localization to the Golgi. Residues 299-350 (EDQSAWPSMDDDEEEAGAKTDSPLPLEEASTPPGKVTVPESSLITLETAPLL) form a disordered region. Residue Thr329 is modified to Phosphothreonine.

The protein belongs to the TMEM115 family. Homooligomer. Interacts with COPB1. May interact with LMAN1. Interacts with the COG complex; probably through COG3.

The protein localises to the golgi apparatus. It localises to the golgi stack membrane. Functionally, may play a role in retrograde transport of proteins from the Golgi to the endoplasmic reticulum. May indirectly play a role in protein glycosylation in the Golgi. The protein is Transmembrane protein 115 of Mus musculus (Mouse).